Consider the following 461-residue polypeptide: Bifunctional protein GlmU (461 aa).

Residues 1-234 are pyrophosphorylase; the sequence is MSLSVVILAA…EIEVEGANNR (234 aa). Residues 8-11, lysine 22, glutamine 77, 82-83, 104-106, glycine 141, glutamate 159, asparagine 174, and asparagine 232 each bind UDP-N-acetyl-alpha-D-glucosamine; these read LAAG, GT, and YGD. Aspartate 106 lines the Mg(2+) pocket. Position 232 (asparagine 232) interacts with Mg(2+). The tract at residues 235–255 is linker; it reads VQLATLERAYQARIAEELMIA. The interval 256 to 461 is N-acetyltransferase; it reads GASLRDPARI…AGWQRPVKKS (206 aa). Positions 338 and 356 each coordinate UDP-N-acetyl-alpha-D-glucosamine. The Proton acceptor role is filled by histidine 368. Residues tyrosine 371 and asparagine 382 each contribute to the UDP-N-acetyl-alpha-D-glucosamine site. Acetyl-CoA contacts are provided by residues alanine 385, 391–392, serine 410, alanine 428, and arginine 445; that span reads NY.

It in the N-terminal section; belongs to the N-acetylglucosamine-1-phosphate uridyltransferase family. This sequence in the C-terminal section; belongs to the transferase hexapeptide repeat family. In terms of assembly, homotrimer. Mg(2+) is required as a cofactor.

Its subcellular location is the cytoplasm. The enzyme catalyses alpha-D-glucosamine 1-phosphate + acetyl-CoA = N-acetyl-alpha-D-glucosamine 1-phosphate + CoA + H(+). The catalysed reaction is N-acetyl-alpha-D-glucosamine 1-phosphate + UTP + H(+) = UDP-N-acetyl-alpha-D-glucosamine + diphosphate. It functions in the pathway nucleotide-sugar biosynthesis; UDP-N-acetyl-alpha-D-glucosamine biosynthesis; N-acetyl-alpha-D-glucosamine 1-phosphate from alpha-D-glucosamine 6-phosphate (route II): step 2/2. The protein operates within nucleotide-sugar biosynthesis; UDP-N-acetyl-alpha-D-glucosamine biosynthesis; UDP-N-acetyl-alpha-D-glucosamine from N-acetyl-alpha-D-glucosamine 1-phosphate: step 1/1. Its pathway is bacterial outer membrane biogenesis; LPS lipid A biosynthesis. Its function is as follows. Catalyzes the last two sequential reactions in the de novo biosynthetic pathway for UDP-N-acetylglucosamine (UDP-GlcNAc). The C-terminal domain catalyzes the transfer of acetyl group from acetyl coenzyme A to glucosamine-1-phosphate (GlcN-1-P) to produce N-acetylglucosamine-1-phosphate (GlcNAc-1-P), which is converted into UDP-GlcNAc by the transfer of uridine 5-monophosphate (from uridine 5-triphosphate), a reaction catalyzed by the N-terminal domain. The chain is Bifunctional protein GlmU from Colwellia psychrerythraea (strain 34H / ATCC BAA-681) (Vibrio psychroerythus).